Here is a 218-residue protein sequence, read N- to C-terminus: uncharacterized protein (218 aa).

A run of 2 helical transmembrane segments spans residues 14 to 34 (CLLSIITILLYWYLRFVYFTS) and 175 to 195 (LIIPIPFGTIKIIVGSPLALV).

This sequence to H.pylori HP0270.

Its subcellular location is the cell membrane. This is an uncharacterized protein from Rickettsia prowazekii (strain Madrid E).